The sequence spans 434 residues: MQLLAIGINHTTAPVSLRERVAFPLEQIKPALGALRTHLSGRNGTEAAILSTCNRTEIYCATDVLKPGEEGFEHTLRWLAQHHNVPASELAPHLYALPQSEAVRHAFRVASGLDSMVLGETQILGQLKDAVRTAGEAGALGTYLNQLFQRTFAVAKEVRGQTEIGAHSVSMAAAAVRLAQRIFESVSTQRVLFIGAGEMIELCATHFAAQTPRQIVVANRTVERGEKLAEQLSEQGLTTQAIRLQDLGDRLHEFDIVVSCTASSLPIIGLGAVERAVKRRKHRPIMMVDLAVPRDVEPEVARLDDVFLYTVDDLGAVVREGNALRQAAVAQAEAIIDSRVLNFMHWLETRSVVPVIRELQSQGEAIRQAEVERARRMLARGDDPAAVLEALSGALTRKFLHGPTHALNHTQGEDREALLRLVPGLFRHSSHSER.

Substrate contacts are provided by residues Thr52–Arg55, Ser115, Glu120–Gln122, and Gln126. Cys53 serves as the catalytic Nucleophile. Residue Gly195–Ile200 participates in NADP(+) binding.

It belongs to the glutamyl-tRNA reductase family. As to quaternary structure, homodimer.

The catalysed reaction is (S)-4-amino-5-oxopentanoate + tRNA(Glu) + NADP(+) = L-glutamyl-tRNA(Glu) + NADPH + H(+). It functions in the pathway porphyrin-containing compound metabolism; protoporphyrin-IX biosynthesis; 5-aminolevulinate from L-glutamyl-tRNA(Glu): step 1/2. Its function is as follows. Catalyzes the NADPH-dependent reduction of glutamyl-tRNA(Glu) to glutamate 1-semialdehyde (GSA). The sequence is that of Glutamyl-tRNA reductase from Cupriavidus metallidurans (strain ATCC 43123 / DSM 2839 / NBRC 102507 / CH34) (Ralstonia metallidurans).